A 298-amino-acid polypeptide reads, in one-letter code: tRNA-cytidine(32) 2-sulfurtransferase (298 aa).

Positions 1-26 are disordered; that stretch reads MTAVISLPDPPQRASRGPRVAGPGQD. Residues 57-62 carry the PP-loop motif motif; it reads SGGKDS. [4Fe-4S] cluster-binding residues include Cys132, Cys135, and Cys223.

Belongs to the TtcA family. In terms of assembly, homodimer. Mg(2+) is required as a cofactor. It depends on [4Fe-4S] cluster as a cofactor.

Its subcellular location is the cytoplasm. The catalysed reaction is cytidine(32) in tRNA + S-sulfanyl-L-cysteinyl-[cysteine desulfurase] + AH2 + ATP = 2-thiocytidine(32) in tRNA + L-cysteinyl-[cysteine desulfurase] + A + AMP + diphosphate + H(+). It participates in tRNA modification. Catalyzes the ATP-dependent 2-thiolation of cytidine in position 32 of tRNA, to form 2-thiocytidine (s(2)C32). The sulfur atoms are provided by the cysteine/cysteine desulfurase (IscS) system. The polypeptide is tRNA-cytidine(32) 2-sulfurtransferase (Stenotrophomonas maltophilia (strain R551-3)).